The primary structure comprises 37 residues: Large ribosomal subunit protein bL36A (37 aa).

The protein belongs to the bacterial ribosomal protein bL36 family.

The sequence is that of Large ribosomal subunit protein bL36A from Actinobacillus pleuropneumoniae serotype 5b (strain L20).